We begin with the raw amino-acid sequence, 106 residues long: UPF0145 protein APL_0465 (106 aa).

Belongs to the UPF0145 family.

The polypeptide is UPF0145 protein APL_0465 (Actinobacillus pleuropneumoniae serotype 5b (strain L20)).